The primary structure comprises 274 residues: uncharacterized protein (274 aa).

The tract at residues 235–274 (ETFDTQQDPKKTPETDKNAAYKGKEKKGKKEERGPRSIMK) is disordered. A compositionally biased stretch (basic and acidic residues) spans 241–274 (QDPKKTPETDKNAAYKGKEKKGKKEERGPRSIMK).

This is an uncharacterized protein from Treponema pallidum (strain Nichols).